Here is a 150-residue protein sequence, read N- to C-terminus: Protein Turandot X1/X2 (150 aa).

The N-terminal stretch at 1–22 is a signal peptide; the sequence is MRLYIGSLLICVLLGIVPFATA. The tract at residues 127–150 is disordered; sequence REEGQSNHANSPTTSPSRIQKMTK. Polar residues predominate over residues 132 to 150; it reads SNHANSPTTSPSRIQKMTK.

This sequence belongs to the Turandot family.

It localises to the secreted. A humoral factor that may play a role in stress tolerance. The sequence is that of Protein Turandot X1/X2 from Drosophila sechellia (Fruit fly).